Here is a 298-residue protein sequence, read N- to C-terminus: Cholesterol 25-hydroxylase (298 aa).

Asparagine 5 is a glycosylation site (N-linked (GlcNAc...) asparagine). The next 3 membrane-spanning stretches (helical) occupy residues 38-58, 84-104, and 124-144; these read FFPV…FVVL, LLPC…PVTL, and LLSH…AWHL. The 136-residue stretch at 128-263 folds into the Fatty acid hydroxylase domain; that stretch reads VLICLLLFDT…FTHWDKMLGT (136 aa). The Histidine box-1 motif lies at 142-146; that stretch reads WHLLH. A Histidine box-2 motif is present at residues 157-161; the sequence is HKVHH. The N-linked (GlcNAc...) asparagine glycan is linked to asparagine 163. The next 2 membrane-spanning stretches (helical) occupy residues 167 to 187 and 190 to 210; these read FALA…FFDV and VAML…NIWL. The Histidine box-3 motif lies at 238-244; that stretch reads HHDLHHS.

This sequence belongs to the sterol desaturase family. Requires Fe cation as cofactor. N-glycosylated. As to expression, expressed in testicular macrophages at all stages, with the highest level in 10 day old animals.

It localises to the endoplasmic reticulum membrane. It catalyses the reaction cholesterol + AH2 + O2 = 25-hydroxycholesterol + A + H2O. It carries out the reaction cholesterol + NADPH + O2 + H(+) = 25-hydroxycholesterol + NADP(+) + H2O. Its function is as follows. Catalyzes the formation of 25-hydroxycholesterol from cholesterol, leading to repress cholesterol biosynthetic enzymes. Plays a key role in cell positioning and movement in lymphoid tissues: 25-hydroxycholesterol is an intermediate in biosynthesis of 7-alpha,25-dihydroxycholesterol (7-alpha,25-OHC), an oxysterol that acts as a ligand for the G protein-coupled receptor GPR183/EBI2, a chemotactic receptor for a number of lymphoid cells. May play an important role in regulating lipid metabolism by synthesizing a corepressor that blocks sterol regulatory element binding protein (SREBP) processing. In testis, production of 25-hydroxycholesterol by macrophages plays a role in Leydig cell differentiation. Required to restrain inflammation in macrophages: production of 25-hydroxycholesterol protects macrophages from cholesterol overload, thereby preventing mitochondrial DNA release and subsequent activation of the AIM2 inflammasome. Interferon-stimulated gene which has broad antiviral activities against a wide range of enveloped viruses. In terms of biological role, catalyzes the formation of 25-hydroxycholesterol from cholesterol, leading to repress cholesterol biosynthetic enzymes. Plays a key role in cell positioning and movement in lymphoid tissues: 25-hydroxycholesterol is an intermediate in biosynthesis of 7-alpha,25-dihydroxycholesterol (7-alpha,25-OHC), an oxysterol that acts as a ligand for the G protein-coupled receptor GPR183/EBI2, a chemotactic receptor for a number of lymphoid cells. May play an important role in regulating lipid metabolism by synthesizing a corepressor that blocks sterol regulatory element binding protein (SREBP) processing. As an interferon-stimulated gene, has broad antiviral activities against a wide range of enveloped viruses. Its product, 25-hydroxycholesterol, activates the ER-localized enzyme ACAT to induce internalization of accessible cholesterol on the plasma membrane and restricts virus-host membranes fusion which inhibits virus replication. In testis, production of 25-hydroxycholesterol by macrophages plays a role in Leydig cell differentiation. The protein is Cholesterol 25-hydroxylase of Rattus norvegicus (Rat).